An 82-amino-acid polypeptide reads, in one-letter code: Small ribosomal subunit protein bS18 (82 aa).

This sequence belongs to the bacterial ribosomal protein bS18 family. In terms of assembly, part of the 30S ribosomal subunit. Forms a tight heterodimer with protein bS6.

Functionally, binds as a heterodimer with protein bS6 to the central domain of the 16S rRNA, where it helps stabilize the platform of the 30S subunit. This chain is Small ribosomal subunit protein bS18, found in Rhizobium meliloti (strain 1021) (Ensifer meliloti).